The chain runs to 88 residues: Small ribosomal subunit protein bS20 (88 aa).

It belongs to the bacterial ribosomal protein bS20 family.

In terms of biological role, binds directly to 16S ribosomal RNA. The chain is Small ribosomal subunit protein bS20 from Bacillus licheniformis (strain ATCC 14580 / DSM 13 / JCM 2505 / CCUG 7422 / NBRC 12200 / NCIMB 9375 / NCTC 10341 / NRRL NRS-1264 / Gibson 46).